A 410-amino-acid polypeptide reads, in one-letter code: MVRINENYLKLKAGYLFPEIARRVNGFLAENPNAPIIKLGIGDVTEPLPAACREAMAKAIDDMGDRANFKGYGPEQGYAWLREKIAAHDFQARGCDIDASEIFVSDGAKCDTGNILDIFGKDNTIAVTDPVYPVYVDTNVMAGHTGEADESGKYGGLTYIPITADNDFVAQIPTEKVDLIYLCFPNNPTGATATKEQLQAWVDYAKTNGSIIFFDAAYEAFITDESLPHSIYELEGAKDCAIEFRSFSKNAGFTGTRCAFTVVPKNLTVTASNGQAVQLWSLWNRRQSTKFNGVSYIVQRGAEAVYSEAGQAQIKTLIDFYLENAAIIRRELQAVGFDVYGGVNAPYVWVKTPAGLSSWDFFDKLLINCNVVGTPGSGFGAAGEGYFRISAFNSRENVLEAMKRITTAFQ.

Residues Tyr-15 and Gly-42 each contribute to the substrate site. Residues Tyr-72, 108–109 (AK), Tyr-132, Asn-187, Tyr-218, and 246–248 (SFS) contribute to the pyridoxal 5'-phosphate site. Substrate-binding residues include Lys-109, Tyr-132, and Asn-187. Lys-249 is modified (N6-(pyridoxal phosphate)lysine). Residues Arg-257 and Asn-292 each coordinate pyridoxal 5'-phosphate. Substrate is bound by residues Asn-292 and Arg-388.

Belongs to the class-I pyridoxal-phosphate-dependent aminotransferase family. LL-diaminopimelate aminotransferase subfamily. In terms of assembly, homodimer. Pyridoxal 5'-phosphate serves as cofactor.

The catalysed reaction is (2S,6S)-2,6-diaminopimelate + 2-oxoglutarate = (S)-2,3,4,5-tetrahydrodipicolinate + L-glutamate + H2O + H(+). It functions in the pathway amino-acid biosynthesis; L-lysine biosynthesis via DAP pathway; LL-2,6-diaminopimelate from (S)-tetrahydrodipicolinate (aminotransferase route): step 1/1. Functionally, involved in the synthesis of meso-diaminopimelate (m-DAP or DL-DAP), required for both lysine and peptidoglycan biosynthesis. Catalyzes the direct conversion of tetrahydrodipicolinate to LL-diaminopimelate. The sequence is that of LL-diaminopimelate aminotransferase from Picosynechococcus sp. (strain ATCC 27264 / PCC 7002 / PR-6) (Agmenellum quadruplicatum).